The chain runs to 388 residues: MHLHEYQAKDLLSSYDIAIPPYRIVSSVEEGELVLRELGINAGVVKVQVHAGGRGKNGGVIIAKSSSEILAAIGKLLKMRFESNQTSGESLPVEKVLITPLVNIASEYYLAVIMDRKNRCPAIMLSKAGGMDIEEVAQKYPDQLLTVPLTPSARIYNYQLRQIIKFMNWEGDTGKQGVQLIKKLVQCFYDNDASLLEINPLVLTQEEELLVLDAKVTIDDNALYRHPKLEVLYDPSQENVRDVLAKKIGLSYIALDGDIGCLVNGAGLAMSTLDILKIHGGSAANFLDVGGSATEQQIQEAVSLVLSDENVEVLFINIFGGIMDCSAVASGLVAVMQTRENLIPTVVRLEGTNVELGKEIVQRSGIPCQFTDSLNEGARLAVALSKQV.

Residues 9–244 form the ATP-grasp domain; the sequence is KDLLSSYDIA…PSQENVRDVL (236 aa). Residues K46, 53–55, V102, and E107 each bind ATP; that span reads GRG. Residues N199 and D213 each contribute to the Mg(2+) site. Substrate-binding positions include N264 and 321–323; that span reads GIM.

The protein belongs to the succinate/malate CoA ligase beta subunit family. Heterotetramer of two alpha and two beta subunits. Mg(2+) is required as a cofactor.

The enzyme catalyses succinate + ATP + CoA = succinyl-CoA + ADP + phosphate. The catalysed reaction is GTP + succinate + CoA = succinyl-CoA + GDP + phosphate. Its pathway is carbohydrate metabolism; tricarboxylic acid cycle; succinate from succinyl-CoA (ligase route): step 1/1. Succinyl-CoA synthetase functions in the citric acid cycle (TCA), coupling the hydrolysis of succinyl-CoA to the synthesis of either ATP or GTP and thus represents the only step of substrate-level phosphorylation in the TCA. The beta subunit provides nucleotide specificity of the enzyme and binds the substrate succinate, while the binding sites for coenzyme A and phosphate are found in the alpha subunit. In Chlamydia felis (strain Fe/C-56) (Chlamydophila felis), this protein is Succinate--CoA ligase [ADP-forming] subunit beta.